Consider the following 487-residue polypeptide: Protein nucleotidyltransferase YdiU (487 aa).

ATP-binding residues include Gly-91, Gly-93, Arg-94, Lys-114, Asp-126, Gly-127, Arg-177, and Arg-184. Residue Asp-253 is the Proton acceptor of the active site. Positions 254 and 263 each coordinate Mg(2+). ATP is bound at residue Asp-263.

The protein belongs to the SELO family. It depends on Mg(2+) as a cofactor. Mn(2+) serves as cofactor.

The catalysed reaction is L-seryl-[protein] + ATP = 3-O-(5'-adenylyl)-L-seryl-[protein] + diphosphate. The enzyme catalyses L-threonyl-[protein] + ATP = 3-O-(5'-adenylyl)-L-threonyl-[protein] + diphosphate. It catalyses the reaction L-tyrosyl-[protein] + ATP = O-(5'-adenylyl)-L-tyrosyl-[protein] + diphosphate. It carries out the reaction L-histidyl-[protein] + UTP = N(tele)-(5'-uridylyl)-L-histidyl-[protein] + diphosphate. The catalysed reaction is L-seryl-[protein] + UTP = O-(5'-uridylyl)-L-seryl-[protein] + diphosphate. The enzyme catalyses L-tyrosyl-[protein] + UTP = O-(5'-uridylyl)-L-tyrosyl-[protein] + diphosphate. Functionally, nucleotidyltransferase involved in the post-translational modification of proteins. It can catalyze the addition of adenosine monophosphate (AMP) or uridine monophosphate (UMP) to a protein, resulting in modifications known as AMPylation and UMPylation. The chain is Protein nucleotidyltransferase YdiU from Yersinia pestis (strain Pestoides F).